Here is an 89-residue protein sequence, read N- to C-terminus: MSRKCPLTGKRPRRGNSYTIRGIAKKKKGIGLKVTGKTKRRFFPNMVTKRLWSTEENKFLKLKISASALRLIDKLGLEKVIARAKSKGF.

Belongs to the bacterial ribosomal protein bL28 family.

In Chlamydia felis (strain Fe/C-56) (Chlamydophila felis), this protein is Large ribosomal subunit protein bL28.